The sequence spans 445 residues: E3 ubiquitin-protein ligase pellino homolog 3 (445 aa).

Positions 1–24 (MVLEGNPDVGSPRTSDLQHPGSQG) are disordered. Ser-11 carries the post-translational modification Phosphoserine. A compositionally biased stretch (polar residues) spans 12 to 24 (PRTSDLQHPGSQG).

The protein belongs to the pellino family. In terms of assembly, interacts with TRAF6, MAP3K14 and MAP3K7. Phosphorylated by IRAK1 enhancing its E3 ligase activity.

It carries out the reaction S-ubiquitinyl-[E2 ubiquitin-conjugating enzyme]-L-cysteine + [acceptor protein]-L-lysine = [E2 ubiquitin-conjugating enzyme]-L-cysteine + N(6)-ubiquitinyl-[acceptor protein]-L-lysine.. Its pathway is protein modification; protein ubiquitination. Its function is as follows. E3 ubiquitin ligase catalyzing the covalent attachment of ubiquitin moieties onto substrate proteins. Involved in the TLR and IL-1 signaling pathways via interaction with the complex containing IRAK kinases and TRAF6. Mediates 'Lys-63'-linked polyubiquitination of IRAK1. Can activate AP1/JUN and ELK1. Acts as a regulator of innate immunity by mediating 'Lys-63'-linked polyubiquitination of RIPK2 downstream of NOD1 and NOD2, thereby transforming RIPK2 into a scaffolding protein for downstream effectors, ultimately leading to activation of the NF-kappa-B and MAP kinases signaling. Catalyzes 'Lys-63'-linked polyubiquitination of RIPK2 in parallel of XIAP. In Mus musculus (Mouse), this protein is E3 ubiquitin-protein ligase pellino homolog 3.